Consider the following 222-residue polypeptide: Interleukin-12 subunit alpha (222 aa).

A signal peptide spans 1-25 (MCPPRGLLLVTILVLLNHLDHLSLA). Disulfide bonds link Cys40–Cys113, Cys67–Cys199, and Cys88–Cys126. Asn42, Asn96, Asn110, and Asn183 each carry an N-linked (GlcNAc...) asparagine glycan.

It belongs to the IL-6 superfamily. Heterodimer with IL12B; disulfide-linked. This heterodimer is known as interleukin IL-12. Heterodimer with EBI3/IL27B; not disulfide-linked. This heterodimer is known as interleukin IL-35. Interacts with NBR1; this interaction promotes IL-12 secretion.

The protein resides in the secreted. In terms of biological role, heterodimerizes with IL12B to form the IL-12 cytokine or with EBI3/IL27B to form the IL-35 cytokine. IL-12 is primarily produced by professional antigen-presenting cells (APCs) such as B-cells and dendritic cells (DCs) as well as macrophages and granulocytes and regulates T-cell and natural killer-cell responses, induces the production of interferon-gamma (IFN-gamma), favors the differentiation of T-helper 1 (Th1) cells and is an important link between innate resistance and adaptive immunity. Mechanistically, exerts its biological effects through a receptor composed of IL12R1 and IL12R2 subunits. Binding to the receptor results in the rapid tyrosine phosphorylation of a number of cellular substrates including the JAK family kinases TYK2 and JAK2. In turn, recruited STAT4 gets phosphorylated and translocates to the nucleus where it regulates cytokine/growth factor responsive genes. As part of IL-35, plays essential roles in maintaining the immune homeostasis of the liver microenvironment and also functions as an immune-suppressive cytokine. Mediates biological events through unconventional receptors composed of IL12RB2 and gp130/IL6ST heterodimers or homodimers. Signaling requires the transcription factors STAT1 and STAT4, which form a unique heterodimer that binds to distinct DNA sites. This chain is Interleukin-12 subunit alpha (IL12A), found in Felis catus (Cat).